Reading from the N-terminus, the 199-residue chain is HTH-type transcriptional regulator BetI (199 aa).

The 61-residue stretch at 8–68 folds into the HTH tetR-type domain; that stretch reads EIRKPQLVKA…ETMREILRQL (61 aa). The H-T-H motif DNA-binding region spans 31–50; it reads SISLISKEAGVSTGIINHYF.

It participates in amine and polyamine biosynthesis; betaine biosynthesis via choline pathway [regulation]. Repressor involved in the biosynthesis of the osmoprotectant glycine betaine. It represses transcription of the choline transporter BetT and the genes of BetAB involved in the synthesis of glycine betaine. The protein is HTH-type transcriptional regulator BetI of Vibrio parahaemolyticus serotype O3:K6 (strain RIMD 2210633).